Consider the following 154-residue polypeptide: Cytochrome c-type biogenesis protein CcmE (154 aa).

Over 1–8 (MHPQRKQR) the chain is Cytoplasmic. The chain crosses the membrane as a helical; Signal-anchor for type II membrane protein span at residues 9–29 (LMIVLFIVVFSSLAVGLIAYA). Residues 30–154 (LRENINLFYP…ATCGGLNYGA (125 aa)) are Periplasmic-facing. Heme-binding residues include His124 and Tyr128.

The protein belongs to the CcmE/CycJ family.

The protein resides in the cell inner membrane. In terms of biological role, heme chaperone required for the biogenesis of c-type cytochromes. Transiently binds heme delivered by CcmC and transfers the heme to apo-cytochromes in a process facilitated by CcmF and CcmH. This is Cytochrome c-type biogenesis protein CcmE from Cellvibrio japonicus (strain Ueda107) (Pseudomonas fluorescens subsp. cellulosa).